Consider the following 125-residue polypeptide: Meiotically up-regulated gene 112 protein (125 aa).

It localises to the golgi apparatus. Functionally, has a role in meiosis. In Schizosaccharomyces pombe (strain 972 / ATCC 24843) (Fission yeast), this protein is Meiotically up-regulated gene 112 protein (mug112).